The following is a 191-amino-acid chain: ATP-dependent Clp protease proteolytic subunit 1 (191 aa).

Catalysis depends on Ser-91, which acts as the Nucleophile. Residue His-116 is part of the active site.

The protein belongs to the peptidase S14 family. As to quaternary structure, fourteen ClpP subunits assemble into 2 heptameric rings which stack back to back to give a disk-like structure with a central cavity, resembling the structure of eukaryotic proteasomes.

It localises to the cytoplasm. The enzyme catalyses Hydrolysis of proteins to small peptides in the presence of ATP and magnesium. alpha-casein is the usual test substrate. In the absence of ATP, only oligopeptides shorter than five residues are hydrolyzed (such as succinyl-Leu-Tyr-|-NHMec, and Leu-Tyr-Leu-|-Tyr-Trp, in which cleavage of the -Tyr-|-Leu- and -Tyr-|-Trp bonds also occurs).. Cleaves peptides in various proteins in a process that requires ATP hydrolysis. Has a chymotrypsin-like activity. Plays a major role in the degradation of misfolded proteins. The sequence is that of ATP-dependent Clp protease proteolytic subunit 1 from Chlamydia pneumoniae (Chlamydophila pneumoniae).